We begin with the raw amino-acid sequence, 324 residues long: Olfactory receptor 51D1 (324 aa).

The Extracellular segment spans residues 1–38 (MQKPQLLVPIIATSNGNLVHAAYFLLVGIPGLGPTIHF). Residues 39 to 59 (WLAFPLCFMYALATLGNLTIV) form a helical membrane-spanning segment. At 60–67 (LIIRVERR) the chain is on the cytoplasmic side. Residues 68–88 (LHEPMYLFLAMLSTIDLVLSS) traverse the membrane as a helical segment. The Extracellular segment spans residues 89–112 (ITMPKMASLFLMGIQEIEFNICLA). The cysteines at positions 110 and 202 are disulfide-linked. Residues 113–133 (QMFLIHALSAVESAVLLAMAF) traverse the membrane as a helical segment. The Cytoplasmic segment spans residues 134 to 152 (DRFVAICHPLRHASVLTGC). The chain crosses the membrane as a helical span at residues 153-173 (TVAKIGLSALTRGFVFFFPLP). Residues 174-209 (FILKWLSYCQTHTVTHSFCLHQDIMKLSCTDTRVNV) are Extracellular-facing. The chain crosses the membrane as a helical span at residues 210 to 230 (VYGLFIILSVMGVDSLFIGFS). At 231–250 (YILILWAVLELSSRRAALKA) the chain is on the cytoplasmic side. Residues 251–271 (FNTCISHLCAVLVFYVPLIGL) traverse the membrane as a helical segment. At 272–285 (SVVHRLGGPTSLLH) the chain is on the extracellular side. A helical transmembrane segment spans residues 286–306 (VVMANTYLLLPPVVNPLVYGA). The Cytoplasmic segment spans residues 307–324 (KTKEICSRVLCMFSQGGK).

This sequence belongs to the G-protein coupled receptor 1 family.

It is found in the cell membrane. Functionally, odorant receptor. The sequence is that of Olfactory receptor 51D1 (OR51D1) from Homo sapiens (Human).